Reading from the N-terminus, the 427-residue chain is Serine--tRNA ligase (427 aa).

228–230 (TSE) is an L-serine binding site. Residue 259–261 (RSE) coordinates ATP. Glu282 provides a ligand contact to L-serine. 346–349 (EISS) provides a ligand contact to ATP. Ser384 lines the L-serine pocket.

Belongs to the class-II aminoacyl-tRNA synthetase family. Type-1 seryl-tRNA synthetase subfamily. Homodimer. The tRNA molecule binds across the dimer.

Its subcellular location is the cytoplasm. The enzyme catalyses tRNA(Ser) + L-serine + ATP = L-seryl-tRNA(Ser) + AMP + diphosphate + H(+). The catalysed reaction is tRNA(Sec) + L-serine + ATP = L-seryl-tRNA(Sec) + AMP + diphosphate + H(+). The protein operates within aminoacyl-tRNA biosynthesis; selenocysteinyl-tRNA(Sec) biosynthesis; L-seryl-tRNA(Sec) from L-serine and tRNA(Sec): step 1/1. Its function is as follows. Catalyzes the attachment of serine to tRNA(Ser). Is also able to aminoacylate tRNA(Sec) with serine, to form the misacylated tRNA L-seryl-tRNA(Sec), which will be further converted into selenocysteinyl-tRNA(Sec). This Ehrlichia ruminantium (strain Welgevonden) protein is Serine--tRNA ligase.